We begin with the raw amino-acid sequence, 311 residues long: Chemotaxis protein CheV3 (311 aa).

The 152-residue stretch at 13-164 folds into the CheW-like domain; that stretch reads EIELVDFRIY…LESILDDLKL (152 aa). Positions 182-308 constitute a Response regulatory domain; that stretch reads EVLFLDDSKT…FTEEISKILD (127 aa). 4-aspartylphosphate is present on Asp241.

In terms of biological role, plays a role in chemotaxis signal transduction system in order to colonize the host stomach. May act as a phosphate sink to control the flow of phosphate to CheAY. This is Chemotaxis protein CheV3 from Helicobacter pylori (strain ATCC 700392 / 26695) (Campylobacter pylori).